A 237-amino-acid polypeptide reads, in one-letter code: MAIHFISDLHLADDTPALNQLFLDTLAAWRGRIAALYILGDLFEYWVGDDDDSPYLAAPLAAMRDFAAQTPLYVMRGNRDFLLGAGFEARSGARLLDDPTLIEAHGQRILLSHGDALCTDDAAYQQFRAMSRNPQWQQAMLAKPLAERHAIARHARAQSEMNKQQTGLTDISDVTENAVRELLAAHGWPTLIHGHTHRPAHHLHDASSRWVIQDWHGGRGGYLLLDDGGIRSLPLGN.

Mn(2+) contacts are provided by D8, H10, D41, N78, and H113. 78–79 lines the substrate pocket; that stretch reads NR. Substrate is bound by residues D121, S159, Q164, and H195. 2 residues coordinate Mn(2+): H195 and H197.

It belongs to the LpxH family. Requires Mn(2+) as cofactor.

It localises to the cell inner membrane. It carries out the reaction UDP-2-N,3-O-bis[(3R)-3-hydroxytetradecanoyl]-alpha-D-glucosamine + H2O = 2-N,3-O-bis[(3R)-3-hydroxytetradecanoyl]-alpha-D-glucosaminyl 1-phosphate + UMP + 2 H(+). It functions in the pathway glycolipid biosynthesis; lipid IV(A) biosynthesis; lipid IV(A) from (3R)-3-hydroxytetradecanoyl-[acyl-carrier-protein] and UDP-N-acetyl-alpha-D-glucosamine: step 4/6. Its function is as follows. Hydrolyzes the pyrophosphate bond of UDP-2,3-diacylglucosamine to yield 2,3-diacylglucosamine 1-phosphate (lipid X) and UMP by catalyzing the attack of water at the alpha-P atom. Involved in the biosynthesis of lipid A, a phosphorylated glycolipid that anchors the lipopolysaccharide to the outer membrane of the cell. The polypeptide is UDP-2,3-diacylglucosamine hydrolase (Chromobacterium violaceum (strain ATCC 12472 / DSM 30191 / JCM 1249 / CCUG 213 / NBRC 12614 / NCIMB 9131 / NCTC 9757 / MK)).